The chain runs to 86 residues: Anti-adapter protein IraP (86 aa).

Residues 1–42 (MKNLIAELLVKLAQKEEESKELVAQVEALEIVVTALLRQMAQ) adopt a coiled-coil conformation.

The protein belongs to the IraP family. In terms of assembly, interacts with RssB.

The protein localises to the cytoplasm. In terms of biological role, inhibits RpoS proteolysis by regulating RssB activity, thereby increasing the stability of the sigma stress factor RpoS especially during phosphate starvation, but also in stationary phase and during nitrogen starvation. Its effect on RpoS stability is due to its interaction with RssB, which probably blocks the interaction of RssB with RpoS, and the consequent delivery of the RssB-RpoS complex to the ClpXP protein degradation pathway. The sequence is that of Anti-adapter protein IraP from Enterobacter sp. (strain 638).